The chain runs to 531 residues: Peptide chain release factor 3 (531 aa).

The tr-type G domain occupies 10 to 278 (RRRRTFAIIS…SLIDWAPAPK (269 aa)). GTP-binding positions include 19–26 (SHPDAGKT), 87–91 (DTPGH), and 141–144 (NKYD).

The protein belongs to the TRAFAC class translation factor GTPase superfamily. Classic translation factor GTPase family. PrfC subfamily.

Its subcellular location is the cytoplasm. Its function is as follows. Increases the formation of ribosomal termination complexes and stimulates activities of RF-1 and RF-2. It binds guanine nucleotides and has strong preference for UGA stop codons. It may interact directly with the ribosome. The stimulation of RF-1 and RF-2 is significantly reduced by GTP and GDP, but not by GMP. This chain is Peptide chain release factor 3, found in Neisseria meningitidis serogroup B (strain ATCC BAA-335 / MC58).